A 273-amino-acid chain; its full sequence is Lactose transport system permease protein LacG (273 aa).

6 consecutive transmembrane segments (helical) span residues 15–35, 77–97, 110–130, 134–154, 182–204, and 240–260; these read YSVLSLAAFLSIFPFIWMVIG, IALVGTALTLLVSSLAGYGFE, VILLTLMVPFAALMIPLFMLM, GLLNTHIAIMLPMIASAFIIF, FFYIYVPVMRSTYAAAFVIVFML, and GTVMIGTILATLPTLLVFFAM. In terms of domain architecture, ABC transmembrane type-1 spans 71–260; the sequence is FWNSVKIALV…LPTLLVFFAM (190 aa).

The protein belongs to the binding-protein-dependent transport system permease family. MalFG subfamily.

The protein resides in the cell inner membrane. In terms of biological role, part of the binding-protein-dependent transport system for lactose. Probably responsible for the translocation of the substrate across the membrane. The protein is Lactose transport system permease protein LacG (lacG) of Rhizobium radiobacter (Agrobacterium tumefaciens).